The following is a 212-amino-acid chain: Probable GTP-binding protein EngB (212 aa).

The region spanning 38-210 (ALPQIAFVGK…KTSLAKCIKL (173 aa)) is the EngB-type G domain. Residues 46-53 (GKSNVGKS), 73-77 (GRTRQ), 91-94 (DLPG), 158-161 (TKSD), and 189-191 (VSS) each bind GTP. Residues serine 53 and threonine 75 each coordinate Mg(2+).

Belongs to the TRAFAC class TrmE-Era-EngA-EngB-Septin-like GTPase superfamily. EngB GTPase family. It depends on Mg(2+) as a cofactor.

Necessary for normal cell division and for the maintenance of normal septation. The polypeptide is Probable GTP-binding protein EngB (Rickettsia bellii (strain OSU 85-389)).